A 96-amino-acid polypeptide reads, in one-letter code: Co-chaperonin GroES (96 aa).

It belongs to the GroES chaperonin family. As to quaternary structure, heptamer of 7 subunits arranged in a ring. Interacts with the chaperonin GroEL.

Its subcellular location is the cytoplasm. Functionally, together with the chaperonin GroEL, plays an essential role in assisting protein folding. The GroEL-GroES system forms a nano-cage that allows encapsulation of the non-native substrate proteins and provides a physical environment optimized to promote and accelerate protein folding. GroES binds to the apical surface of the GroEL ring, thereby capping the opening of the GroEL channel. This Allochromatium vinosum (Chromatium vinosum) protein is Co-chaperonin GroES.